A 160-amino-acid chain; its full sequence is Protein-export protein SecB (160 aa).

The protein belongs to the SecB family. As to quaternary structure, homotetramer, a dimer of dimers. One homotetramer interacts with 1 SecA dimer.

The protein resides in the cytoplasm. One of the proteins required for the normal export of preproteins out of the cell cytoplasm. It is a molecular chaperone that binds to a subset of precursor proteins, maintaining them in a translocation-competent state. It also specifically binds to its receptor SecA. In Rhizobium johnstonii (strain DSM 114642 / LMG 32736 / 3841) (Rhizobium leguminosarum bv. viciae), this protein is Protein-export protein SecB.